We begin with the raw amino-acid sequence, 336 residues long: HTH-type transcriptional repressor PurR (336 aa).

In terms of domain architecture, HTH lacI-type spans alanine 2–cysteine 56. Residues isoleucine 4 to asparagine 23 constitute a DNA-binding region (H-T-H motif). A DNA-binding region spans residues serine 48–cysteine 56. Hypoxanthine is bound by residues phenylalanine 73, lysine 189, phenylalanine 220, and aspartate 274.

As to quaternary structure, homodimer.

It functions in the pathway purine metabolism; purine nucleotide biosynthesis [regulation]. Functionally, is the main repressor of the genes involved in the de novo synthesis of purine nucleotides, regulating purB, purC, purEK, purF, purHD, purL, purMN and guaBA expression. PurR is allosterically activated to bind its cognate DNA by binding the purine corepressors, hypoxanthine or guanine, thereby effecting transcription repression. The protein is HTH-type transcriptional repressor PurR of Vibrio cholerae serotype O1 (strain ATCC 39315 / El Tor Inaba N16961).